The chain runs to 180 residues: Large ribosomal subunit protein uL6 (180 aa).

The protein belongs to the universal ribosomal protein uL6 family. As to quaternary structure, part of the 50S ribosomal subunit.

Its function is as follows. This protein binds to the 23S rRNA, and is important in its secondary structure. It is located near the subunit interface in the base of the L7/L12 stalk, and near the tRNA binding site of the peptidyltransferase center. This is Large ribosomal subunit protein uL6 from Cutibacterium acnes (strain DSM 16379 / KPA171202) (Propionibacterium acnes).